Here is a 161-residue protein sequence, read N- to C-terminus: Phosphopantetheine adenylyltransferase (161 aa).

Ser-10 contributes to the substrate binding site. ATP-binding positions include 10 to 11 (SF) and His-18. Positions 42, 75, and 89 each coordinate substrate. ATP is bound by residues 90–92 (GLR), Glu-100, and 125–131 (LSPISSS).

This sequence belongs to the bacterial CoaD family. As to quaternary structure, homohexamer. Requires Mg(2+) as cofactor.

The protein resides in the cytoplasm. The enzyme catalyses (R)-4'-phosphopantetheine + ATP + H(+) = 3'-dephospho-CoA + diphosphate. Its pathway is cofactor biosynthesis; coenzyme A biosynthesis; CoA from (R)-pantothenate: step 4/5. Reversibly transfers an adenylyl group from ATP to 4'-phosphopantetheine, yielding dephospho-CoA (dPCoA) and pyrophosphate. This is Phosphopantetheine adenylyltransferase from Streptococcus agalactiae serotype III (strain NEM316).